A 143-amino-acid polypeptide reads, in one-letter code: MVTRDVVAQGTFDILHPGHVHYLREAKAMGDRLHVIVARSENVTHKAPPVVPDRQRVEMVEALDPVDYARLGHAEDIFVPIEQIEPDVIALGYDQHHEVEGIETALDERGLDCEVRRAGPRKASEDEILSTGSIIEKILDERS.

Residues 11-12 (TF), 16-19 (HPGH), and aspartate 94 each bind ATP.

It belongs to the archaeal FAD synthase family. In terms of assembly, homodimer. It depends on a divalent metal cation as a cofactor.

It catalyses the reaction FMN + ATP + H(+) = FAD + diphosphate. Its pathway is cofactor biosynthesis; FAD biosynthesis; FAD from FMN: step 1/1. Catalyzes the transfer of the AMP portion of ATP to flavin mononucleotide (FMN) to produce flavin adenine dinucleotide (FAD) coenzyme. The chain is FAD synthase from Halomicrobium mukohataei (strain ATCC 700874 / DSM 12286 / JCM 9738 / NCIMB 13541) (Haloarcula mukohataei).